The primary structure comprises 41 residues: Large ribosomal subunit protein bL36 (41 aa).

It belongs to the bacterial ribosomal protein bL36 family.

The protein is Large ribosomal subunit protein bL36 of Azorhizobium caulinodans (strain ATCC 43989 / DSM 5975 / JCM 20966 / LMG 6465 / NBRC 14845 / NCIMB 13405 / ORS 571).